Consider the following 231-residue polypeptide: CLAVATA3/ESR (CLE)-related protein 4B-2 (231 aa).

Residues 1 to 21 (MATNTMLCLLILSVVLALAFA) form the signal peptide. The tract at residues 21 to 83 (ATNKKGDEEP…SNQLPNNNWM (63 aa)) is required for secretion from the host cytoplasm to the host apoplasm. Residue Asn32 is glycosylated (N-linked (GlcNAc...) asparagine). The segment at 116-231 (RKTGMHSQRH…APAGPDPIHH (116 aa)) is disordered. 2 stretches are compositionally biased toward basic and acidic residues: residues 125–137 (HHEE…EKRV) and 144–221 (PIHH…EKRG). The A-1 repeat unit spans residues 127 to 135 (EETTLEQEK). The tract at residues 127-219 (EETTLEQEKR…HEETTFEQEK (93 aa)) is 5 X approximate repeat A. The CLE-1 repeat unit spans residues 136-147 (RVAGAGPDPIHH). Positions 136–231 (RVAGAGPDPI…APAGPDPIHH (96 aa)) are 5 X approximate repeat CLE. The stretch at 148-156 (EETTLEQEK) is one A-2 repeat. The stretch at 157 to 168 (RAVPAGPDPKHH) is one CLE-2 repeat. An A-3 repeat occupies 169–177 (EETTLEQEK). Residues 178–189 (RAVPAGPDPKHH) form a CLE-3 repeat. The A-4 repeat unit spans residues 190 to 198 (EETTLEQEK). A CLE-4 repeat occupies 199-210 (RAVPAGPDPKHH). An A-5 repeat occupies 211 to 219 (EETTFEQEK). The CLE-5 repeat unit spans residues 220–231 (RGAPAGPDPIHH).

Belongs to the CLV3/ESR signal peptide family. Highly expressed exclusively within the dorsal esophageal gland cell during syncytium formation in host plants.

It is found in the secreted. The protein resides in the host cytoplasm. The protein localises to the host extracellular space. It localises to the extracellular space. Its subcellular location is the apoplast. In terms of biological role, mimics host plant CLE extracellular signal peptides that regulate cell fate. May play a role in the differentiation or division of feeding cells (syncytia) induced in plant roots during infection. The chain is CLAVATA3/ESR (CLE)-related protein 4B-2 (CLE-4B-2) from Globodera rostochiensis (Golden nematode worm).